The following is a 413-amino-acid chain: Arginine biosynthesis bifunctional protein ArgJ (413 aa).

The substrate site is built by T154, K180, T191, E277, N408, and T413. The active-site Nucleophile is T191.

The protein belongs to the ArgJ family. In terms of assembly, heterotetramer of two alpha and two beta chains.

The protein localises to the cytoplasm. The enzyme catalyses N(2)-acetyl-L-ornithine + L-glutamate = N-acetyl-L-glutamate + L-ornithine. It catalyses the reaction L-glutamate + acetyl-CoA = N-acetyl-L-glutamate + CoA + H(+). Its pathway is amino-acid biosynthesis; L-arginine biosynthesis; L-ornithine and N-acetyl-L-glutamate from L-glutamate and N(2)-acetyl-L-ornithine (cyclic): step 1/1. It participates in amino-acid biosynthesis; L-arginine biosynthesis; N(2)-acetyl-L-ornithine from L-glutamate: step 1/4. Functionally, catalyzes two activities which are involved in the cyclic version of arginine biosynthesis: the synthesis of N-acetylglutamate from glutamate and acetyl-CoA as the acetyl donor, and of ornithine by transacetylation between N(2)-acetylornithine and glutamate. The polypeptide is Arginine biosynthesis bifunctional protein ArgJ (Synechocystis sp. (strain ATCC 27184 / PCC 6803 / Kazusa)).